A 43-amino-acid polypeptide reads, in one-letter code: Protein PsbN (43 aa).

Residues alanine 4 to tyrosine 24 form a helical membrane-spanning segment.

The protein belongs to the PsbN family.

It localises to the cellular thylakoid membrane. Its function is as follows. May play a role in photosystem I and II biogenesis. This chain is Protein PsbN, found in Trichormus variabilis (strain ATCC 29413 / PCC 7937) (Anabaena variabilis).